Consider the following 1162-residue polypeptide: Isoleucine--tRNA ligase (1162 aa).

A 'HIGH' region motif is present at residues 50–60; the sequence is PSANGMPGIHH. The short motif at 710 to 714 is the 'KMSKS' region element; sequence KMSKR. Residue Lys-713 participates in ATP binding.

The protein belongs to the class-I aminoacyl-tRNA synthetase family. IleS type 2 subfamily. Monomer. Zn(2+) is required as a cofactor.

Its subcellular location is the cytoplasm. The enzyme catalyses tRNA(Ile) + L-isoleucine + ATP = L-isoleucyl-tRNA(Ile) + AMP + diphosphate. Its function is as follows. Catalyzes the attachment of isoleucine to tRNA(Ile). As IleRS can inadvertently accommodate and process structurally similar amino acids such as valine, to avoid such errors it has two additional distinct tRNA(Ile)-dependent editing activities. One activity is designated as 'pretransfer' editing and involves the hydrolysis of activated Val-AMP. The other activity is designated 'posttransfer' editing and involves deacylation of mischarged Val-tRNA(Ile). The sequence is that of Isoleucine--tRNA ligase from Bacteroides thetaiotaomicron (strain ATCC 29148 / DSM 2079 / JCM 5827 / CCUG 10774 / NCTC 10582 / VPI-5482 / E50).